Consider the following 144-residue polypeptide: Large ribosomal subunit protein uL15 (144 aa).

Polar residues predominate over residues 1–10 (MYLNTISPSR). The segment at 1–51 (MYLNTISPSRGSKHLSKRVGRGIGSGLGKTGGRGHKGQKSRSGGKVRLGFE) is disordered. The segment covering 11–20 (GSKHLSKRVG) has biased composition (basic residues). The segment covering 21 to 31 (RGIGSGLGKTG) has biased composition (gly residues). Basic residues predominate over residues 32–44 (GRGHKGQKSRSGG).

This sequence belongs to the universal ribosomal protein uL15 family. As to quaternary structure, part of the 50S ribosomal subunit.

Binds to the 23S rRNA. The protein is Large ribosomal subunit protein uL15 of Blochmanniella pennsylvanica (strain BPEN).